The primary structure comprises 522 residues: MSQQHTLPVTLSPALSQELLKTVPPPVNTQQEQMKQPTPLPPPCQKVLGELPVEVPSKQEEKHMTTVKGLPEQECEQQQQEPQEQELQQQHWEQHEEHQKAENPEQQLKQEKAQRDQQLNEHLEEEKKLLDQQLNQELIKRDEQLGIKKEQLLELTEQQEGQLEHLEQQEGQLELPEQQEGQLEHLEQQEGQLKHLDQQGKQPELPEQQVAQLKHLEQQEGQLKHLEHQKGELQVPEEQVGQLKYLEQQEGQLKHLDQQEKQPELPEQQVGQLKHLEQQEGQLEHMEHQEGQLGLPEQQVGQLKQLEEQEGQPKHLEEEEGQLKHLVQQEGQLEHLVQQERQLEQQEGKVQHLEQQVEQLKHLEEQEGQLKHLEQQQGQLEVSEQQVGQPKHLEQEGKQLELPEQQEGQLKHLEKQEAQLELPEQQVGQPKHPEQQEKQLEHPEQQEGQLKHLEQQEGQLKDLEQQKGQLEQQQGQLEQPVFAPAPGQVQDIQPVLPTKGEALLPVEQQQQKQEVQWPPKHK.

Over residues 1 to 15 the composition is skewed to polar residues; that stretch reads MSQQHTLPVTLSPAL. Disordered regions lie at residues 1-126, 159-329, and 366-496; these read MSQQ…LEEE, QEGQ…LVQQ, and QEGQ…QPVL. Over residues 76–91 the composition is skewed to low complexity; sequence EQQQQEPQEQELQQQH. Residues 92-126 show a composition bias toward basic and acidic residues; sequence WEQHEEHQKAENPEQQLKQEKAQRDQQLNEHLEEE. Positions 169–181 are enriched in low complexity; it reads QEGQLELPEQQEG. Composition is skewed to basic and acidic residues over residues 182–198, 214–231, 252–264, 274–290, and 305–323; these read QLEH…HLDQ, KHLE…HQKG, QLKH…KQPE, KHLE…EHQE, and QLEE…EGQL. Positions 375–389 are enriched in low complexity; it reads QQQGQLEVSEQQVGQ. Basic and acidic residues-rich tracts occupy residues 391-401, 409-418, and 431-465; these read KHLEQEGKQLE, QLKHLEKQEA, and KHPE…DLEQ. The segment covering 466-479 has biased composition (low complexity); that stretch reads QKGQLEQQQGQLEQ.

The protein belongs to the involucrin family. In terms of assembly, directly or indirectly cross-linked to cornifelin (CNFN). Substrate of transglutaminase. Specific glutamines or lysines are cross-linked to keratins, desmoplakin and to inter involucrin molecules. As to expression, keratinocytes of epidermis and other stratified squamous epithelia.

The protein resides in the cytoplasm. Its function is as follows. Part of the insoluble cornified cell envelope (CE) of stratified squamous epithelia. In Hylobates lar (Lar gibbon), this protein is Involucrin (IVL).